The sequence spans 258 residues: 3-deoxy-manno-octulosonate cytidylyltransferase (258 aa).

This sequence belongs to the KdsB family.

It localises to the cytoplasm. It carries out the reaction 3-deoxy-alpha-D-manno-oct-2-ulosonate + CTP = CMP-3-deoxy-beta-D-manno-octulosonate + diphosphate. It participates in nucleotide-sugar biosynthesis; CMP-3-deoxy-D-manno-octulosonate biosynthesis; CMP-3-deoxy-D-manno-octulosonate from 3-deoxy-D-manno-octulosonate and CTP: step 1/1. It functions in the pathway bacterial outer membrane biogenesis; lipopolysaccharide biosynthesis. Its function is as follows. Activates KDO (a required 8-carbon sugar) for incorporation into bacterial lipopolysaccharide in Gram-negative bacteria. This Nitrobacter hamburgensis (strain DSM 10229 / NCIMB 13809 / X14) protein is 3-deoxy-manno-octulosonate cytidylyltransferase.